The sequence spans 279 residues: Tryptophan synthase alpha chain (279 aa).

Residues glutamate 50 and aspartate 61 each act as proton acceptor in the active site.

Belongs to the TrpA family. As to quaternary structure, tetramer of two alpha and two beta chains.

It carries out the reaction (1S,2R)-1-C-(indol-3-yl)glycerol 3-phosphate + L-serine = D-glyceraldehyde 3-phosphate + L-tryptophan + H2O. It participates in amino-acid biosynthesis; L-tryptophan biosynthesis; L-tryptophan from chorismate: step 5/5. Its function is as follows. The alpha subunit is responsible for the aldol cleavage of indoleglycerol phosphate to indole and glyceraldehyde 3-phosphate. In Azorhizobium caulinodans (strain ATCC 43989 / DSM 5975 / JCM 20966 / LMG 6465 / NBRC 14845 / NCIMB 13405 / ORS 571), this protein is Tryptophan synthase alpha chain.